The sequence spans 346 residues: Phosphoribosylformylglycinamidine cyclo-ligase (346 aa).

It belongs to the AIR synthase family.

It is found in the cytoplasm. It carries out the reaction 2-formamido-N(1)-(5-O-phospho-beta-D-ribosyl)acetamidine + ATP = 5-amino-1-(5-phospho-beta-D-ribosyl)imidazole + ADP + phosphate + H(+). It participates in purine metabolism; IMP biosynthesis via de novo pathway; 5-amino-1-(5-phospho-D-ribosyl)imidazole from N(2)-formyl-N(1)-(5-phospho-D-ribosyl)glycinamide: step 2/2. The chain is Phosphoribosylformylglycinamidine cyclo-ligase from Bacillus cereus (strain G9842).